We begin with the raw amino-acid sequence, 348 residues long: Matrix protein (348 aa).

Cysteines 251 and 295 form a disulfide.

The protein belongs to the morbillivirus/respirovirus/rubulavirus M protein family.

It localises to the virion. Functionally, the M protein has a crucial role in virus assembly and interacts with the RNP complex as well as with the viral membrane. In Homo sapiens (Human), this protein is Matrix protein (M).